The chain runs to 154 residues: Small ribosomal subunit protein uS19B (154 aa).

Serine 63 is modified (phosphoserine).

The protein belongs to the universal ribosomal protein uS19 family. In terms of assembly, component of the small ribosomal subunit (SSU). Mature yeast ribosomes consist of a small (40S) and a large (60S) subunit. The 40S small subunit contains 1 molecule of ribosomal RNA (18S rRNA) and at least 33 different proteins. The large 60S subunit contains 3 rRNA molecules (25S, 5.8S and 5S rRNA) and at least 46 different proteins.

The protein resides in the cytoplasm. It is found in the nucleus. Its subcellular location is the nucleolus. Component of the ribosome, a large ribonucleoprotein complex responsible for the synthesis of proteins in the cell. The small ribosomal subunit (SSU) binds messenger RNAs (mRNAs) and translates the encoded message by selecting cognate aminoacyl-transfer RNA (tRNA) molecules. The large subunit (LSU) contains the ribosomal catalytic site termed the peptidyl transferase center (PTC), which catalyzes the formation of peptide bonds, thereby polymerizing the amino acids delivered by tRNAs into a polypeptide chain. The nascent polypeptides leave the ribosome through a tunnel in the LSU and interact with protein factors that function in enzymatic processing, targeting, and the membrane insertion of nascent chains at the exit of the ribosomal tunnel. uS19 is involved in the nuclear export of the small ribosomal subunit precursor. Has a role in the late stage of the assembly of pre-40S particles within the nucleus and controls their export to the cytoplasm. The chain is Small ribosomal subunit protein uS19B (rps1502) from Schizosaccharomyces pombe (strain 972 / ATCC 24843) (Fission yeast).